The following is a 505-amino-acid chain: Keratin, type II cuticular Hb1 (505 aa).

Residues 1–106 form a head region; that stretch reads MTCGSGFGGR…PNAQCVKQEE (106 aa). Residues 106-417 enclose the IF rod domain; sequence EKEQIKSLNS…RLLEGEEQRL (312 aa). Positions 107–141 are coil 1A; the sequence is KEQIKSLNSRFAAFIDKVRFLEQQNKLLETKLQFY. A linker 1 region spans residues 142–151; sequence QNRECCQSNL. Residues 152–252 form a coil 1B region; sequence EPLFEGYIET…YEEEILILQS (101 aa). A Glycyl lysine isopeptide (Lys-Gly) (interchain with G-Cter in SUMO1) cross-link involves residue Lys212. The linker 12 stretch occupies residues 253–269; that stretch reads HISDTSVVVKLDNSRDL. Positions 270–413 are coil 2; it reads NMDCIIAEIK…ATYRRLLEGE (144 aa). A tail region spans residues 414–505; it reads EQRLCEGIGA…GSCGSSCRKC (92 aa).

The protein belongs to the intermediate filament family. As to quaternary structure, heterotetramer of two type I and two type II keratins. In terms of tissue distribution, abundantly expressed in the differentiating cortex of growing (anagen) hair. Expression is restricted to the keratinocytes of the hair cortex and is absent from inner root sheath and medulla. Expressed in malignant lymph node tissue in breast carcinoma tissue.

In Homo sapiens (Human), this protein is Keratin, type II cuticular Hb1 (KRT81).